The primary structure comprises 546 residues: Chaperonin GroEL (546 aa).

ATP is bound by residues 29 to 32, Lys50, 86 to 90, Gly414, and Asp495; these read TLGP and DGTTT. Positions 526 to 546 are disordered; it reads AKEGAPAGGGMPDMGGMGGMM. The segment covering 531–546 has biased composition (gly residues); it reads PAGGGMPDMGGMGGMM.

It belongs to the chaperonin (HSP60) family. In terms of assembly, forms a cylinder of 14 subunits composed of two heptameric rings stacked back-to-back. Interacts with the co-chaperonin GroES.

It localises to the cytoplasm. The enzyme catalyses ATP + H2O + a folded polypeptide = ADP + phosphate + an unfolded polypeptide.. Functionally, together with its co-chaperonin GroES, plays an essential role in assisting protein folding. The GroEL-GroES system forms a nano-cage that allows encapsulation of the non-native substrate proteins and provides a physical environment optimized to promote and accelerate protein folding. The chain is Chaperonin GroEL from Jannaschia sp. (strain CCS1).